A 91-amino-acid chain; its full sequence is Non-hemolytic enterotoxin 105 kDa component (91 aa).

Zn(2+) is required as a cofactor.

The protein resides in the secreted. In terms of biological role, this protein is a metalloprotease with gelatinolytic and collagenolytic activity and is a component of the non-hemolytic enterotoxin complex (NHE). The sequence is that of Non-hemolytic enterotoxin 105 kDa component from Bacillus cereus.